The sequence spans 760 residues: Xaa-Pro dipeptidyl-peptidase (760 aa).

Residues S349, D469, and H499 each act as charge relay system in the active site.

This sequence belongs to the peptidase S15 family. In terms of assembly, homodimer.

Its subcellular location is the cytoplasm. The catalysed reaction is Hydrolyzes Xaa-Pro-|- bonds to release unblocked, N-terminal dipeptides from substrates including Ala-Pro-|-p-nitroanilide and (sequentially) Tyr-Pro-|-Phe-Pro-|-Gly-Pro-|-Ile.. In terms of biological role, removes N-terminal dipeptides sequentially from polypeptides having unsubstituted N-termini provided that the penultimate residue is proline. The chain is Xaa-Pro dipeptidyl-peptidase from Streptococcus pyogenes serotype M1.